Here is a 183-residue protein sequence, read N- to C-terminus: Ribosome rescue factor SmrB (183 aa).

In terms of domain architecture, Smr spans 98 to 173 (LDLHGLTQLQ…GDAALLVLIE (76 aa)).

Belongs to the SmrB family. As to quaternary structure, associates with collided ribosomes, but not with correctly translating polysomes.

Its function is as follows. Acts as a ribosome collision sensor. Detects stalled/collided disomes (pairs of ribosomes where the leading ribosome is stalled and a second ribosome has collided with it) and endonucleolytically cleaves mRNA at the 5' boundary of the stalled ribosome. Stalled/collided disomes form a new interface (primarily via the 30S subunits) that binds SmrB. Cleaved mRNA becomes available for tmRNA ligation, leading to ribosomal subunit dissociation and rescue of stalled ribosomes. The protein is Ribosome rescue factor SmrB of Escherichia coli O7:K1 (strain IAI39 / ExPEC).